Reading from the N-terminus, the 471-residue chain is ATP synthase subunit beta (471 aa).

156 to 163 (GGAGVGKT) contributes to the ATP binding site.

It belongs to the ATPase alpha/beta chains family. As to quaternary structure, F-type ATPases have 2 components, CF(1) - the catalytic core - and CF(0) - the membrane proton channel. CF(1) has five subunits: alpha(3), beta(3), gamma(1), delta(1), epsilon(1). CF(0) has three main subunits: a(1), b(2) and c(9-12). The alpha and beta chains form an alternating ring which encloses part of the gamma chain. CF(1) is attached to CF(0) by a central stalk formed by the gamma and epsilon chains, while a peripheral stalk is formed by the delta and b chains.

Its subcellular location is the cell membrane. The catalysed reaction is ATP + H2O + 4 H(+)(in) = ADP + phosphate + 5 H(+)(out). Produces ATP from ADP in the presence of a proton gradient across the membrane. The catalytic sites are hosted primarily by the beta subunits. This Mycoplasmoides gallisepticum (strain R(low / passage 15 / clone 2)) (Mycoplasma gallisepticum) protein is ATP synthase subunit beta.